The sequence spans 86 residues: RQC P-site tRNA stabilizing factor (86 aa).

The 62-residue stretch at 1-62 (MRLDKFLKVS…QKLVTVQVNE (62 aa)) folds into the S4 RNA-binding domain.

Belongs to the RqcP family. As to quaternary structure, associates with stalled 50S ribosomal subunits. Binds to RqcH, 23S rRNA and the P-site tRNA. Does not require RqcH for association with 50S subunits. Crystallized 50S subunits are variously associated with an A/P-site tRNA with or without RqcH, as well as with P- and E-site tRNAs but no RqcH. Displaced from the 50S subunit by puromycin but not thiostrepton.

Key component of the ribosome quality control system (RQC), a ribosome-associated complex that mediates the extraction of incompletely synthesized nascent chains from stalled ribosomes and their subsequent degradation. RqcH recruits Ala-charged tRNA, and with RqcP directs the elongation of stalled nascent chains on 50S ribosomal subunits, leading to non-templated C-terminal alanine extensions (Ala tail). The Ala tail promotes nascent chain degradation. RqcP is associated with the translocation-like movement of the peptidyl-tRNA from the A-site into the P-site. RqcH, RqcP and charged tRNA(Ala) are necessary and sufficient to add an Ala tail to a model stalled nascent peptide; does not add Val. The chain is RQC P-site tRNA stabilizing factor from Bacillus subtilis (strain 168).